The primary structure comprises 753 residues: 5-methyltetrahydropteroyltriglutamate--homocysteine methyltransferase (753 aa).

Residues 17 to 20 and Lys-117 each bind 5-methyltetrahydropteroyltri-L-glutamate; that span reads RELK. L-homocysteine contacts are provided by residues 431–433 and Glu-484; that span reads IGS. L-methionine-binding positions include 431 to 433 and Glu-484; that span reads IGS. 5-methyltetrahydropteroyltri-L-glutamate is bound by residues 515 to 516 and Trp-561; that span reads RC. Position 599 (Asp-599) interacts with L-homocysteine. Position 599 (Asp-599) interacts with L-methionine. 5-methyltetrahydropteroyltri-L-glutamate is bound at residue Glu-605. Positions 641, 643, and 665 each coordinate Zn(2+). His-694 acts as the Proton donor in catalysis. A Zn(2+)-binding site is contributed by Cys-726.

This sequence belongs to the vitamin-B12 independent methionine synthase family. Zn(2+) is required as a cofactor.

It catalyses the reaction 5-methyltetrahydropteroyltri-L-glutamate + L-homocysteine = tetrahydropteroyltri-L-glutamate + L-methionine. The protein operates within amino-acid biosynthesis; L-methionine biosynthesis via de novo pathway; L-methionine from L-homocysteine (MetE route): step 1/1. In terms of biological role, catalyzes the transfer of a methyl group from 5-methyltetrahydrofolate to homocysteine resulting in methionine formation. This chain is 5-methyltetrahydropteroyltriglutamate--homocysteine methyltransferase, found in Escherichia coli O9:H4 (strain HS).